A 518-amino-acid chain; its full sequence is Chromosomal replication initiator protein DnaA (518 aa).

The domain I, interacts with DnaA modulators stretch occupies residues 1–72 (MTLAEFWPLC…VREELAAGRS (72 aa)). Positions 72–180 (SAFVFKPGEG…DAEEARYEQT (109 aa)) are domain II. A disordered region spans residues 145 to 178 (EPRQAAGSASRPESAAVAKARTDAQRDAEEARYE). Over residues 164 to 177 (ARTDAQRDAEEARY) the composition is skewed to basic and acidic residues. Residues 181–397 (NLSPDYTFDT…GAFNRVGASS (217 aa)) are domain III, AAA+ region. ATP is bound by residues Gly225, Gly227, Lys228, and Thr229. Residues 398–518 (RFMNRPVIDI…YEKLLILIQN (121 aa)) are domain IV, binds dsDNA.

The protein belongs to the DnaA family. In terms of assembly, oligomerizes as a right-handed, spiral filament on DNA at oriC.

It is found in the cytoplasm. Plays an essential role in the initiation and regulation of chromosomal replication. ATP-DnaA binds to the origin of replication (oriC) to initiate formation of the DNA replication initiation complex once per cell cycle. Binds the DnaA box (a 9 base pair repeat at the origin) and separates the double-stranded (ds)DNA. Forms a right-handed helical filament on oriC DNA; dsDNA binds to the exterior of the filament while single-stranded (ss)DNA is stabiized in the filament's interior. The ATP-DnaA-oriC complex binds and stabilizes one strand of the AT-rich DNA unwinding element (DUE), permitting loading of DNA polymerase. After initiation quickly degrades to an ADP-DnaA complex that is not apt for DNA replication. Binds acidic phospholipids. This chain is Chromosomal replication initiator protein DnaA, found in Neisseria meningitidis serogroup A / serotype 4A (strain DSM 15465 / Z2491).